The following is a 266-amino-acid chain: UPF0294 protein YafD (266 aa).

It belongs to the UPF0294 family.

It is found in the cytoplasm. This chain is UPF0294 protein YafD (yafD), found in Escherichia coli O157:H7.